A 459-amino-acid polypeptide reads, in one-letter code: Phosphomethylpyrimidine synthase (459 aa).

Residues Asn80, Met109, Tyr139, His175, 195-197 (SRG), 236-239 (DSLR), and Glu275 each bind substrate. Residue His279 coordinates Zn(2+). Tyr302 provides a ligand contact to substrate. Position 343 (His343) interacts with Zn(2+). Positions 423, 426, and 431 each coordinate [4Fe-4S] cluster.

It belongs to the ThiC family. [4Fe-4S] cluster serves as cofactor.

It catalyses the reaction 5-amino-1-(5-phospho-beta-D-ribosyl)imidazole + S-adenosyl-L-methionine = 4-amino-2-methyl-5-(phosphooxymethyl)pyrimidine + CO + 5'-deoxyadenosine + formate + L-methionine + 3 H(+). The protein operates within cofactor biosynthesis; thiamine diphosphate biosynthesis. Its function is as follows. Catalyzes the synthesis of the hydroxymethylpyrimidine phosphate (HMP-P) moiety of thiamine from aminoimidazole ribotide (AIR) in a radical S-adenosyl-L-methionine (SAM)-dependent reaction. This is Phosphomethylpyrimidine synthase from Synechocystis sp. (strain ATCC 27184 / PCC 6803 / Kazusa).